Consider the following 327-residue polypeptide: Toluene-4-monooxygenase system, hydroxylase component subunit beta (327 aa).

Belongs to the TmoE/XamoE family. The alkene monooxygenase multicomponent enzyme system is composed of an electron transfer component and a monooxygenase component interacting with the effector protein TmoD. The electron transfer component is composed of a ferredoxin reductase (TmoF) and a ferredoxin (TmoC), and the monooxygenase component is formed by a heterohexamer (dimer of heterotrimers) of two alpha subunits (TmoA), two beta subunits (TmoE) and two gamma subunits (TmoB).

The catalysed reaction is toluene + NADH + O2 + H(+) = 4-methylphenol + NAD(+) + H2O. It participates in xenobiotic degradation; toluene degradation. With respect to regulation, inhibited by Zn(2+) and Cu(2+). In terms of biological role, component of the toluene-4-monooxygenase multicomponent enzyme system which catalyzes the O2- and NADH-dependent hydroxylation of toluene to form p-cresol. Also able to convert benzene to phenol, catechol, and 1,2,3-trihydroxybenzene by successive hydroxylations. This Ectopseudomonas mendocina (Pseudomonas mendocina) protein is Toluene-4-monooxygenase system, hydroxylase component subunit beta.